Consider the following 418-residue polypeptide: Inner capsid protein sigma-2 (418 aa).

Belongs to the orthoreovirus sigma-1 protein family. As to quaternary structure, interacts with protein mu-NS; in viral inclusions.

It localises to the virion. In terms of biological role, inner capsid (core) component. The protein is Inner capsid protein sigma-2 (S2) of Reovirus type 3 (strain Dearing) (T3D).